A 134-amino-acid chain; its full sequence is MATRALLLLLLLPPLLLLAGCAARPAPPRAPRHSDGTFTSELSRLRDSARLQRLLQGLVGKRSQQDPENNTAWTKSGEDRLCQLWSHMPALQAWMPMKPPVDQAWSPWLPPGLRAGALVSEPAIPAAEGSPMPP.

The first 21 residues, methionine 1–cysteine 21, serve as a signal peptide directing secretion. The propeptide occupies alanine 22–proline 31. Valine 59 is modified (valine amide). A Phosphoserine modification is found at serine 63. A propeptide spanning residues serine 63–proline 134 is cleaved from the precursor.

This sequence belongs to the glucagon family.

The protein resides in the secreted. In terms of biological role, hormone involved in different processes, such as regulation of the pH of the duodenal content, food intake and water homeostasis. Exerts its biological effects by binding to secretin receptor (SCTR), a G-protein coupled receptor expressed in the basolateral domain of several cells. Acts as a key gastrointestinal hormone by regulating the pH of the duodenal content. Secreted by S cells of the duodenum in the crypts of Lieberkuehn and regulates the pH of the duodenum by (1) inhibiting the secretion of gastric acid from the parietal cells of the stomach and (2) stimulating the production of bicarbonate (NaHCO(3)) from the ductal cells of the pancreas. Production of bicarbonate is essential to neutralize the pH and ensure no damage is done to the small intestine by the gastric acid. In addition to regulating the pH of the duodenal content, plays a central role in diet induced thermogenesis: acts as a non-sympathetic brown fat (BAT) activator mediating prandial thermogenesis, which consequentially induces satiation. Mechanistically, secretin released by the gut after a meal binds to secretin receptor (SCTR) in brown adipocytes, activating brown fat thermogenesis by stimulating lipolysis, which is sensed in the brain and promotes satiation. Also able to stimulate lipolysis in white adipocytes. Also plays an important role in cellular osmoregulation: released into the systemic circulation in response to hyperosmolality and acts at different levels in the hypothalamus, pituitary and kidney to regulate water homeostasis. Also plays a role in the central nervous system, possibly by acting as a neuropeptide hormone: required for hippocampal synaptic function and neural progenitor cells maintenance. The sequence is that of Secretin from Sus scrofa (Pig).